A 129-amino-acid polypeptide reads, in one-letter code: Small ribosomal subunit protein uS11 (129 aa).

The protein belongs to the universal ribosomal protein uS11 family. As to quaternary structure, part of the 30S ribosomal subunit. Interacts with proteins S7 and S18. Binds to IF-3.

Functionally, located on the platform of the 30S subunit, it bridges several disparate RNA helices of the 16S rRNA. Forms part of the Shine-Dalgarno cleft in the 70S ribosome. The sequence is that of Small ribosomal subunit protein uS11 from Limosilactobacillus fermentum (strain NBRC 3956 / LMG 18251) (Lactobacillus fermentum).